We begin with the raw amino-acid sequence, 176 residues long: MSRVANNPITVPKGVEVTLGDGIAVKGPLGSMSQPMSSDVTVALNDGVLTFAPVGSSIQANAMAGTLRALVNNMVQGVSKGFERKLTLVGVGYRAQAQGDALNLSLGFSHPVVHKMPAGIKVETPTQTEIVIKGIDRQAVGQVAADVRAYRPPEPYKGKGVRYSDEVVIKKETKKK.

It belongs to the universal ribosomal protein uL6 family. In terms of assembly, part of the 50S ribosomal subunit.

In terms of biological role, this protein binds to the 23S rRNA, and is important in its secondary structure. It is located near the subunit interface in the base of the L7/L12 stalk, and near the tRNA binding site of the peptidyltransferase center. The polypeptide is Large ribosomal subunit protein uL6 (Thiobacillus denitrificans (strain ATCC 25259 / T1)).